The sequence spans 334 residues: HTH-type transcriptional regulator RegA (334 aa).

The HTH lacI-type domain maps to 1–57 (MAASIKDVAREARVSIATVSRVLNNVDVVNEETKKKVMEAIKKLDYRPNIVARSLKT). Residues 5-24 (IKDVAREARVSIATVSRVLN) constitute a DNA-binding region (H-T-H motif).

In terms of biological role, involved in the regulation of amylase production. The sequence is that of HTH-type transcriptional regulator RegA (regA) from Clostridium acetobutylicum (strain ATCC 824 / DSM 792 / JCM 1419 / IAM 19013 / LMG 5710 / NBRC 13948 / NRRL B-527 / VKM B-1787 / 2291 / W).